The following is a 513-amino-acid chain: Histidine ammonia-lyase (513 aa).

The segment at residues 142-144 (ASG) is a cross-link (5-imidazolinone (Ala-Gly)). The residue at position 143 (Ser-143) is a 2,3-didehydroalanine (Ser).

This sequence belongs to the PAL/histidase family. Post-translationally, contains an active site 4-methylidene-imidazol-5-one (MIO), which is formed autocatalytically by cyclization and dehydration of residues Ala-Ser-Gly.

It is found in the cytoplasm. It catalyses the reaction L-histidine = trans-urocanate + NH4(+). Its pathway is amino-acid degradation; L-histidine degradation into L-glutamate; N-formimidoyl-L-glutamate from L-histidine: step 1/3. The chain is Histidine ammonia-lyase from Methylobacterium sp. (strain 4-46).